The following is a 590-amino-acid chain: TPR repeat-containing protein PA4667 (590 aa).

TPR repeat units lie at residues 235-268 (VAPLLLRSRLLQSMKRSDEALPLLKAGIKEHPDD), 269-302 (KRVRLAYARLLVEQNRLDDAKAEFAGLVQQFPDD), 370-403 (LPAQLRQTDVLLKAGRVDEAAQRLDKARSEQPDY), 405-438 (IQLYLIEAEALSNNDQQEKAWQAIQEGLKQYPED), and 508-541 (PAILDSMGWINYRQGKLADAERYLRQALQRYPDH).

The sequence is that of TPR repeat-containing protein PA4667 from Pseudomonas aeruginosa (strain ATCC 15692 / DSM 22644 / CIP 104116 / JCM 14847 / LMG 12228 / 1C / PRS 101 / PAO1).